Here is a 220-residue protein sequence, read N- to C-terminus: UPF0319 protein YccT (220 aa).

Positions 1 to 20 (MKTGALATFLALCLPVTVFA) are cleaved as a signal peptide.

The protein belongs to the UPF0319 family.

This chain is UPF0319 protein YccT, found in Salmonella paratyphi A (strain ATCC 9150 / SARB42).